A 152-amino-acid polypeptide reads, in one-letter code: Superoxide dismutase [Cu-Zn] (152 aa).

The Cu cation site is built by histidine 45, histidine 47, and histidine 62. A disulfide bond links cysteine 56 and cysteine 145. Zn(2+)-binding residues include histidine 62, histidine 70, histidine 79, and aspartate 82. Cu cation is bound at residue histidine 119.

It belongs to the Cu-Zn superoxide dismutase family. In terms of assembly, homodimer. Requires Cu cation as cofactor. The cofactor is Zn(2+).

It localises to the cytoplasm. The enzyme catalyses 2 superoxide + 2 H(+) = H2O2 + O2. Destroys radicals which are normally produced within the cells and which are toxic to biological systems. The sequence is that of Superoxide dismutase [Cu-Zn] (SODCC) from Nicotiana plumbaginifolia (Leadwort-leaved tobacco).